Reading from the N-terminus, the 436-residue chain is tRNA(Ile)-lysidine synthase (436 aa).

ATP is bound at residue 25–30; it reads SGGLDS.

The protein belongs to the tRNA(Ile)-lysidine synthase family.

The protein resides in the cytoplasm. It catalyses the reaction cytidine(34) in tRNA(Ile2) + L-lysine + ATP = lysidine(34) in tRNA(Ile2) + AMP + diphosphate + H(+). In terms of biological role, ligates lysine onto the cytidine present at position 34 of the AUA codon-specific tRNA(Ile) that contains the anticodon CAU, in an ATP-dependent manner. Cytidine is converted to lysidine, thus changing the amino acid specificity of the tRNA from methionine to isoleucine. The sequence is that of tRNA(Ile)-lysidine synthase from Serratia proteamaculans (strain 568).